We begin with the raw amino-acid sequence, 659 residues long: MGEEPVPADKALGKKFKKKNASWSIEESEALYRVEAWGAPYFAINAAGNITVSPNGDRGGSLDLLELVEALRQRKLGLPLLIRFSDILADRLERLNSCFAKAIARYNYPNTYQAVYPVKCNQQRHLVEALVRFGQTSQCGLEAGSKPELMIALATLPPPLDRQDKHTKPLIICNGYKDQDYLETALLAKRLGHRPIIIIEQLRELEWVLHISQQLNIKPMLGVRARLSCQSLKSSEISSGNGDRAKLGLTMPDIVTVIHRLEENNCLDCLKMLHFHLGTQVSDIALIKEAMREASQLYVELVKLGAKMRYLNVGGGLAVDYDGSKTNYPASKNYNMQNYANDIVAAIQDACELGQVSPPILVSESGRAIMAHQSVLVFDVLGSNQTGFSEPHPPDENAHPLLKNLWECYETITAEQYQEQYHDALQLKTEASSLFNFGYLSLTERGQAEQIHWACCRKIFEITRQLEYIPEDFQALDKIMTDIYYVNLSVFQSAPESWSLDQLFPILPIHHLNEKPSQRVILADLTCDSDGKIDRFIDLWDVKSYLEVHPLENDGNPYYLGMFLVGAYQEIMGNLHNLFGDINVVHIATTPQGYQIESVVRGDTMTEVLGYVQYDSDDLLEGLRRHTELALSNGQITLEESRRLLEDYEQSLRRYTYLS.

An N6-(pyridoxal phosphate)lysine modification is found at Lys119. 311-321 (LNVGGGLAVDY) is a substrate binding site.

Belongs to the Orn/Lys/Arg decarboxylase class-II family. SpeA subfamily. The cofactor is Mg(2+). Pyridoxal 5'-phosphate serves as cofactor.

It catalyses the reaction L-arginine + H(+) = agmatine + CO2. Functionally, catalyzes the biosynthesis of agmatine from arginine. The chain is Biosynthetic arginine decarboxylase 2 (speA2) from Synechocystis sp. (strain ATCC 27184 / PCC 6803 / Kazusa).